The chain runs to 284 residues: Diaminopimelate epimerase (284 aa).

Residues asparagine 21, glutamine 54, and asparagine 74 each contribute to the substrate site. The active-site Proton donor is the cysteine 83. Residues 84-85 (GN), asparagine 167, asparagine 200, and 218-219 (ER) each bind substrate. Cysteine 227 (proton acceptor) is an active-site residue. 228–229 (GS) provides a ligand contact to substrate.

The protein belongs to the diaminopimelate epimerase family. In terms of assembly, homodimer.

The protein localises to the cytoplasm. It carries out the reaction (2S,6S)-2,6-diaminopimelate = meso-2,6-diaminopimelate. It participates in amino-acid biosynthesis; L-lysine biosynthesis via DAP pathway; DL-2,6-diaminopimelate from LL-2,6-diaminopimelate: step 1/1. In terms of biological role, catalyzes the stereoinversion of LL-2,6-diaminopimelate (L,L-DAP) to meso-diaminopimelate (meso-DAP), a precursor of L-lysine and an essential component of the bacterial peptidoglycan. The sequence is that of Diaminopimelate epimerase from Buchnera aphidicola subsp. Acyrthosiphon pisum (strain 5A).